We begin with the raw amino-acid sequence, 286 residues long: Bifunctional protein FolD (286 aa).

NADP(+) is bound by residues 165–167, Ser-190, and Val-231; that span reads GRS.

This sequence belongs to the tetrahydrofolate dehydrogenase/cyclohydrolase family. In terms of assembly, homodimer.

The enzyme catalyses (6R)-5,10-methylene-5,6,7,8-tetrahydrofolate + NADP(+) = (6R)-5,10-methenyltetrahydrofolate + NADPH. It carries out the reaction (6R)-5,10-methenyltetrahydrofolate + H2O = (6R)-10-formyltetrahydrofolate + H(+). It participates in one-carbon metabolism; tetrahydrofolate interconversion. Catalyzes the oxidation of 5,10-methylenetetrahydrofolate to 5,10-methenyltetrahydrofolate and then the hydrolysis of 5,10-methenyltetrahydrofolate to 10-formyltetrahydrofolate. In Bacillus cereus (strain B4264), this protein is Bifunctional protein FolD.